Consider the following 487-residue polypeptide: N-succinylglutamate 5-semialdehyde dehydrogenase (487 aa).

The segment at 1 to 23 (MTHFIKGQWHTGKGHDVASSNPA) is disordered. NAD(+) is bound at residue 220–225 (GSSRTG). Active-site residues include glutamate 243 and cysteine 277.

Belongs to the aldehyde dehydrogenase family. AstD subfamily.

It catalyses the reaction N-succinyl-L-glutamate 5-semialdehyde + NAD(+) + H2O = N-succinyl-L-glutamate + NADH + 2 H(+). It functions in the pathway amino-acid degradation; L-arginine degradation via AST pathway; L-glutamate and succinate from L-arginine: step 4/5. Catalyzes the NAD-dependent reduction of succinylglutamate semialdehyde into succinylglutamate. The sequence is that of N-succinylglutamate 5-semialdehyde dehydrogenase from Shewanella oneidensis (strain ATCC 700550 / JCM 31522 / CIP 106686 / LMG 19005 / NCIMB 14063 / MR-1).